The primary structure comprises 201 residues: Recombination protein RecR (201 aa).

A C4-type zinc finger spans residues 60 to 75 (CSCCGNVDTSDPCTIC). Positions 83–178 (ATLIVVEDVS…RVTRLAHGVP (96 aa)) constitute a Toprim domain.

It belongs to the RecR family.

Functionally, may play a role in DNA repair. It seems to be involved in an RecBC-independent recombinational process of DNA repair. It may act with RecF and RecO. In Brucella melitensis biotype 2 (strain ATCC 23457), this protein is Recombination protein RecR.